A 589-amino-acid chain; its full sequence is Oligo-1,6-glucosidase IMA2 (589 aa).

The active-site Nucleophile is the aspartate 215. Catalysis depends on glutamate 277, which acts as the Proton donor.

This sequence belongs to the glycosyl hydrolase 13 family.

It catalyses the reaction Hydrolysis of (1-&gt;6)-alpha-D-glucosidic linkages in some oligosaccharides produced from starch and glycogen by alpha-amylase, and in isomaltose.. Alpha-glucosidase with specificity for isomaltase, methyl-alpha-glucoside, and palatinose. This is Oligo-1,6-glucosidase IMA2 (IMA2) from Saccharomyces cerevisiae (strain ATCC 204508 / S288c) (Baker's yeast).